Consider the following 139-residue polypeptide: MPWRAGNGVGLEAQAGTQEAGPEEYCQEELGAEEEMAARAAWPVLRSVNSRELSRIIICNHSPRIVLPVWLNYYGKLLPYLTLLPGRDFRIHNFRSHPWLFRDARTHDKLLVNQTELFVPSSNVNGQPVFANITLQCIP.

A disordered region spans residues 1–22 (MPWRAGNGVGLEAQAGTQEAGP). Positions 54–135 (SRIIICNHSP…GQPVFANITL (82 aa)) are beta-domain.

Belongs to the VHL family. Interacts via the beta domain with the ODD domain of HIF1A. This interaction is independent of prolyl hydroxylation of HIF1A. Abundantly expressed in the placenta.

Its function is as follows. Functions as a dominant-negative VHL to serve as a protector of HIFalpha. In Homo sapiens (Human), this protein is von Hippel-Lindau-like protein (VHLL).